A 79-amino-acid polypeptide reads, in one-letter code: CDC42 small effector protein 1 (79 aa).

2 S-palmitoyl cysteine lipidation sites follow: Cys10 and Cys11. In terms of domain architecture, CRIB spans 30-43; it reads IGEPMNFVHLTHIG. The segment at 48–79 is disordered; that stretch reads GAGDGLAMTGAVQEQMRSKGNRDRPWSNSRGL. Residues 63 to 72 show a composition bias toward basic and acidic residues; that stretch reads MRSKGNRDRP.

Belongs to the CDC42SE/SPEC family. Interacts with CDC42 (in GTP-bound form). Interacts weakly with RAC1 and not at all with RHOA.

Its subcellular location is the cytoplasm. It is found in the cytoskeleton. It localises to the cell membrane. Functionally, probably involved in the organization of the actin cytoskeleton by acting downstream of CDC42, inducing actin filament assembly. Alters CDC42-induced cell shape changes. In activated T-cells, may play a role in CDC42-mediated F-actin accumulation at the immunological synapse. May play a role in early contractile events in phagocytosis in macrophages. This Pongo abelii (Sumatran orangutan) protein is CDC42 small effector protein 1 (CDC42SE1).